A 461-amino-acid polypeptide reads, in one-letter code: Phosphatidate cytidylyltransferase 1 (461 aa).

Positions 1–67 are disordered; that stretch reads MLELRHRGSC…IPEIPPSSDR (67 aa). At Arg-7 the chain carries Omega-N-methylarginine. A compositionally biased stretch (basic and acidic residues) spans 20 to 56; sequence PHREGEAAGGDHETESTSDKETDIDDRYGDLDSRTDS. Ser-35 and Ser-37 each carry phosphoserine. 6 helical membrane-spanning segments follow: residues 96–116, 149–169, 183–203, 230–250, 279–299, and 357–377; these read MISL…LLVL, FLLC…FATF, HRFI…LSLV, LVIQ…SSVI, GFIG…YVLS, and IALS…ASGF.

Belongs to the CDS family. In terms of assembly, homodimer. Interacts with FOS; this interaction may enhance catalytic activity. Mg(2+) is required as a cofactor. Expressed in adult tissues such as placenta, brain, small intestine, ovary, testis and prostate. Highly expressed in fetal kidney, lung and brain. Lower level in fetal liver.

Its subcellular location is the endoplasmic reticulum membrane. The catalysed reaction is a 1,2-diacyl-sn-glycero-3-phosphate + CTP + H(+) = a CDP-1,2-diacyl-sn-glycerol + diphosphate. It carries out the reaction 1-octadecanoyl-2-(5Z,8Z,11Z,14Z-eicosatetraenoyl)-sn-glycero-3-phosphate + CTP + H(+) = 1-octadecanoyl-2-(5Z,8Z,11Z,14Z-eicosatetraenoyl)-sn-glycero-3-cytidine-5'-diphosphate + diphosphate. The enzyme catalyses 1-octadecanoyl-2-(9Z,12Z-octadecadienoyl)-sn-glycero-3-phosphate + CTP + H(+) = 1-octadecanoyl-2-(9Z,12Z-octadecadienoyl)-sn-glycero-3-cytidine-5'-diphosphate + diphosphate. It catalyses the reaction 1-hexadecanoyl-2-(5Z,8Z,11Z,14Z-eicosatetraenoyl)-sn-glycero-3-phosphate + CTP + H(+) = 1-hexadecanoyl-2-(5Z,8Z,11Z,14Z-eicosatetraenoyl)-sn-glycero-3-cytidine-5'-diphosphate + diphosphate. The catalysed reaction is 1,2-di-(5Z,8Z,11Z,14Z)-eicosatetraenoyl-sn-glycero-3-phosphate + CTP + H(+) = 1,2-di-(5Z,8Z,11Z,14Z-eicosatetraenoyl)-sn-glycero-3-cytidine-5'-diphosphate + diphosphate. It carries out the reaction 1-octadecanoyl-2-(9Z-octadecenoyl)-sn-glycero-3-phosphate + CTP + H(+) = 1-octadecanoyl-2-(9Z-octadecenoyl)-sn-glycero-3-cytidine-5'-diphosphate + diphosphate. The enzyme catalyses 1-octadecanoyl-2-(4Z,7Z,10Z,13Z,16Z,19Z-docosahexaenoyl)-sn-glycero-3-phosphate + CTP + H(+) = 1-octadecanoyl-2-(4Z,7Z,10Z,13Z,16Z,19Z-docosahexaenoyl)-sn-glycero-3-cytidine-5'-diphosphate + diphosphate. It catalyses the reaction 1,2-di-(9Z,12Z-octadecadienoyl)-sn-glycero-3-phosphate + CTP + H(+) = 1,2-di-(9Z,12Z-octadecadienoyl)-sn-glycero-3-cytidine-5'-diphosphate + diphosphate. The catalysed reaction is 1,2-di-(9Z-octadecenoyl)-sn-glycero-3-phosphate + CTP + H(+) = 1,2-di-(9Z-octadecenoyl)-sn-glycero-3-cytidine-5'-diphosphate + diphosphate. The protein operates within phospholipid metabolism; CDP-diacylglycerol biosynthesis; CDP-diacylglycerol from sn-glycerol 3-phosphate: step 3/3. Inhibited by its anionic phospholipid end products, with phosphatidylinositol-(4,5)- bisphosphate showing the strongest inhibition. Functionally, catalyzes the conversion of phosphatidic acid (PA) to CDP-diacylglycerol (CDP-DAG), an essential intermediate in the synthesis of phosphatidylglycerol, cardiolipin and phosphatidylinositol. Exhibits almost no acyl chain preference for PA, showing no discrimination for the sn-1/sn-2 acyl chain composition of PAs. Plays an important role in regulating the growth of lipid droplets which are storage organelles at the center of lipid and energy homeostasis. Positively regulates the differentiation and development of adipocytes. The chain is Phosphatidate cytidylyltransferase 1 from Homo sapiens (Human).